Reading from the N-terminus, the 647-residue chain is Replication protein E1 (647 aa).

The Nuclear localization signal signature appears at lysine 86–lysine 88. Serine 92 carries the post-translational modification Phosphoserine; by host. Residues threonine 154–serine 186 form a disordered region. The span at glutamate 159–cysteine 170 shows a compositional bias: basic and acidic residues. A DNA-binding region region spans residues aspartate 183–aspartate 349. An SF3 helicase domain is found at isoleucine 448–valine 598. Position 474–481 (glycine 474–serine 481) interacts with ATP. Lysine 555 is covalently cross-linked (Glycyl lysine isopeptide (Lys-Gly) (interchain with G-Cter in SUMO)).

Belongs to the papillomaviridae E1 protein family. Can form hexamers. Interacts with E2 protein; this interaction increases E1 DNA binding specificity. Interacts with host DNA polymerase subunit POLA2. Interacts with host single stranded DNA-binding protein RPA1. Interacts with host TOP1; this interaction stimulates the enzymatic activity of TOP1. Post-translationally, phosphorylated. Sumoylated.

Its subcellular location is the host nucleus. It carries out the reaction Couples ATP hydrolysis with the unwinding of duplex DNA by translocating in the 3'-5' direction.. It catalyses the reaction ATP + H2O = ADP + phosphate + H(+). Its function is as follows. ATP-dependent DNA 3'-5' helicase required for initiation of viral DNA replication. It forms a complex with the viral E2 protein. The E1-E2 complex binds to the replication origin which contains binding sites for both proteins. During the initial step, a dimer of E1 interacts with a dimer of protein E2 leading to a complex that binds the viral origin of replication with high specificity. Then, a second dimer of E1 displaces the E2 dimer in an ATP-dependent manner to form the E1 tetramer. Following this, two E1 monomers are added to each half of the site, which results in the formation of two E1 trimers on the viral ori. Subsequently, two hexamers will be created. The double hexamer acts as a bi-directional helicase machinery and unwinds the viral DNA and then recruits the host DNA polymerase to start replication. The chain is Replication protein E1 from Human papillomavirus 39.